The primary structure comprises 139 residues: Putative pre-16S rRNA nuclease (139 aa).

The protein belongs to the YqgF nuclease family.

It localises to the cytoplasm. Could be a nuclease involved in processing of the 5'-end of pre-16S rRNA. This Phocaeicola vulgatus (strain ATCC 8482 / DSM 1447 / JCM 5826 / CCUG 4940 / NBRC 14291 / NCTC 11154) (Bacteroides vulgatus) protein is Putative pre-16S rRNA nuclease.